Here is a 240-residue protein sequence, read N- to C-terminus: Keratinocyte-associated protein 3 (240 aa).

Transmembrane regions (helical) follow at residues valine 21–glycine 41, valine 63–serine 83, valine 94–leucine 114, and alanine 163–tyrosine 183.

It belongs to the TMEM54 family. In terms of tissue distribution, expressed in skin, pancreas and keratinocytes.

Its subcellular location is the membrane. This chain is Keratinocyte-associated protein 3 (KRTCAP3), found in Homo sapiens (Human).